A 67-amino-acid polypeptide reads, in one-letter code: Preprofallaxidin-4 (67 aa).

Positions 1–22 (MASLKKFLFLVLFLGMVSLSIC) are cleaved as a signal peptide. The propeptide occupies 23–46 (DKEKREGENEEEEEEHEEESEEKR). A disordered region spans residues 24 to 48 (KEKREGENEEEEEEHEEESEEKRGL). Over residues 30-42 (ENEEEEEEHEEES) the composition is skewed to acidic residues.

This sequence belongs to the frog skin active peptide (FSAP) family. Dermaseptin subfamily. As to expression, expressed by the skin glands.

Its subcellular location is the secreted. The sequence is that of Preprofallaxidin-4 from Litoria fallax (Eastern dwarf tree frog).